A 100-amino-acid chain; its full sequence is Small ribosomal subunit protein uS14c (100 aa).

It belongs to the universal ribosomal protein uS14 family. As to quaternary structure, part of the 30S ribosomal subunit.

It localises to the plastid. Binds 16S rRNA, required for the assembly of 30S particles. The chain is Small ribosomal subunit protein uS14c (rps14) from Cuscuta gronovii (Common dodder).